A 162-amino-acid chain; its full sequence is MGLEKEKLECSIIMDEDEFNRSIEPILSKKARLYSSAPDRDPHDINAQLKVGFEDVIAEPASAHSFDRVWIGSSATFELVKFIFYRLLTTLLAVPAAFILGVVFGVLSCIHIWLVMPVTRSFLMLLPSIQVVWKSVTDMFITPLFHSMGRSLSSIQVRTSDT.

Residues 1–86 lie on the Cytoplasmic side of the membrane; that stretch reads MGLEKEKLEC…FELVKFIFYR (86 aa). The segment at residues 87–107 is an intramembrane region (helical); that stretch reads LLTTLLAVPAAFILGVVFGVL. Residues 108 to 162 are Cytoplasmic-facing; the sequence is SCIHIWLVMPVTRSFLMLLPSIQVVWKSVTDMFITPLFHSMGRSLSSIQVRTSDT.

This sequence belongs to the caveolin family. In terms of assembly, homooligomer.

It is found in the golgi apparatus membrane. It localises to the cell membrane. The protein localises to the membrane. The protein resides in the caveola. In terms of biological role, may act as a scaffolding protein within caveolar membranes. Interacts directly with G-protein alpha subunits and can functionally regulate their activity. The polypeptide is Caveolin-2 (cav2) (Takifugu rubripes (Japanese pufferfish)).